The following is a 215-amino-acid chain: Probable nicotinate-nucleotide adenylyltransferase (215 aa).

It belongs to the NadD family.

The enzyme catalyses nicotinate beta-D-ribonucleotide + ATP + H(+) = deamido-NAD(+) + diphosphate. Its pathway is cofactor biosynthesis; NAD(+) biosynthesis; deamido-NAD(+) from nicotinate D-ribonucleotide: step 1/1. In terms of biological role, catalyzes the reversible adenylation of nicotinate mononucleotide (NaMN) to nicotinic acid adenine dinucleotide (NaAD). The chain is Probable nicotinate-nucleotide adenylyltransferase from Shewanella sp. (strain W3-18-1).